The sequence spans 156 residues: Transcriptional regulator MraZ (156 aa).

SpoVT-AbrB domains lie at 5 to 51 (TFEK…GKAL) and 80 to 123 (MAKL…SREA).

Belongs to the MraZ family. As to quaternary structure, forms oligomers.

The protein resides in the cytoplasm. The protein localises to the nucleoid. The protein is Transcriptional regulator MraZ of Caulobacter vibrioides (strain ATCC 19089 / CIP 103742 / CB 15) (Caulobacter crescentus).